The following is a 291-amino-acid chain: Tyrosine recombinase XerD (291 aa).

The Core-binding (CB) domain occupies 1–82 (MEEGLIDRLL…ACKRLYIWME (82 aa)). The 183-residue stretch at 103–285 (NIPTLITEQQ…ANVWLQGVVK (183 aa)) folds into the Tyr recombinase domain. Active-site residues include Arg-143, Lys-167, His-237, Arg-240, and His-263. Tyr-272 functions as the O-(3'-phospho-DNA)-tyrosine intermediate in the catalytic mechanism.

The protein belongs to the 'phage' integrase family. XerD subfamily. As to quaternary structure, forms a cyclic heterotetrameric complex composed of two molecules of XerC and two molecules of XerD.

The protein resides in the cytoplasm. Site-specific tyrosine recombinase, which acts by catalyzing the cutting and rejoining of the recombining DNA molecules. The XerC-XerD complex is essential to convert dimers of the bacterial chromosome into monomers to permit their segregation at cell division. It also contributes to the segregational stability of plasmids. The sequence is that of Tyrosine recombinase XerD from Neisseria meningitidis serogroup B (strain ATCC BAA-335 / MC58).